A 472-amino-acid polypeptide reads, in one-letter code: Bifunctional protein HldE (472 aa).

The interval 1–315 (MAKRVKILVV…QLLNSSFGAN (315 aa)) is ribokinase. 192 to 195 (NKKE) contacts ATP. Residue Asp-260 is part of the active site. The cytidylyltransferase stretch occupies residues 340–472 (FTNGCFDILH…IKDAKNDDKK (133 aa)).

The protein in the N-terminal section; belongs to the carbohydrate kinase PfkB family. This sequence in the C-terminal section; belongs to the cytidylyltransferase family. In terms of assembly, homodimer.

The catalysed reaction is D-glycero-beta-D-manno-heptose 7-phosphate + ATP = D-glycero-beta-D-manno-heptose 1,7-bisphosphate + ADP + H(+). It carries out the reaction D-glycero-beta-D-manno-heptose 1-phosphate + ATP + H(+) = ADP-D-glycero-beta-D-manno-heptose + diphosphate. It functions in the pathway nucleotide-sugar biosynthesis; ADP-L-glycero-beta-D-manno-heptose biosynthesis; ADP-L-glycero-beta-D-manno-heptose from D-glycero-beta-D-manno-heptose 7-phosphate: step 1/4. Its pathway is nucleotide-sugar biosynthesis; ADP-L-glycero-beta-D-manno-heptose biosynthesis; ADP-L-glycero-beta-D-manno-heptose from D-glycero-beta-D-manno-heptose 7-phosphate: step 3/4. Its function is as follows. Catalyzes the phosphorylation of D-glycero-D-manno-heptose 7-phosphate at the C-1 position to selectively form D-glycero-beta-D-manno-heptose-1,7-bisphosphate. In terms of biological role, catalyzes the ADP transfer from ATP to D-glycero-beta-D-manno-heptose 1-phosphate, yielding ADP-D-glycero-beta-D-manno-heptose. This chain is Bifunctional protein HldE, found in Campylobacter concisus (strain 13826).